A 428-amino-acid chain; its full sequence is Sorting nexin-31 (428 aa).

In terms of domain architecture, PX spans 1-107 (MHICIPVTEE…EYFKKLQMDT (107 aa)).

Belongs to the sorting nexin family.

In terms of biological role, may be involved in protein trafficking. This is Sorting nexin-31 (snx31) from Xenopus tropicalis (Western clawed frog).